The following is a 1446-amino-acid chain: ABC transporter G family member 53 (1446 aa).

Positions 153–426 constitute an ABC transporter 1 domain; that stretch reads ANTLHITPNR…FESVGFKCPE (274 aa). ATP is bound at residue 186 to 193; sequence GPPGAGKT. One can recognise an ABC transmembrane type-2 1 domain in the interval 504–717; sequence ELLKANIDRE…AQNAISVNEF (214 aa). The next 6 helical transmembrane spans lie at 523 to 543, 555 to 575, 610 to 630, 641 to 661, 666 to 686, and 752 to 772; these read VYIF…TVFI, GGIY…NGLA, TPLS…VIGF, FLLL…IAGF, VVAS…GGFI, and IGVG…TICL. The ABC transporter 2 domain occupies 849–1101; that stretch reads ITFEDIRYSV…ELIRYFESIE (253 aa). 894-901 is an ATP binding site; that stretch reads GVSGAGKT. The ABC transmembrane type-2 2 domain maps to 1174–1388; the sequence is TQCLACLWKQ…TLYGLVTSQF (215 aa). A run of 7 helical transmembrane segments spans residues 1195–1215, 1225–1242, 1281–1301, 1308–1328, 1338–1358, 1363–1383, and 1415–1435; these read AVKY…FWGV, LFNA…MGVQ, LPYI…MIGF, FFWY…YGMM, VASV…GFII, IPIW…LYGL, and FLWV…FLFG.

The protein belongs to the ABC transporter superfamily. ABCG family. PDR (TC 3.A.1.205) subfamily.

Its subcellular location is the membrane. Its function is as follows. May be a general defense protein. The polypeptide is ABC transporter G family member 53 (Oryza sativa subsp. japonica (Rice)).